A 260-amino-acid polypeptide reads, in one-letter code: Mantle protein (260 aa).

The signal sequence occupies residues 1-16 (MLAVLLFAALVATAYS).

Prismatic layer of shell (at protein level). Expressed primarily in the mantle with highest level in the mantle edge and lower level in the mantle pallium.

It is found in the secreted. The sequence is that of Mantle protein from Pinctada maxima (Silver-lipped pearl oyster).